The following is a 314-amino-acid chain: MSKMTPQEMAQTIGSGLLSFPVTPFKADYSFDEATYRANMDWLCGYDVAGLFAAGGTGEFFSLTPTEVPQIVKIAVEETKGRVPVLAGTGYGTAIAREIAVGAEKAGADGLLLLPPYLTHSEQDGLAAHVEAVCAAVKIGVIVYNRDNAILQPDTLARLAERCPNLVGYKDGIGDIELMTRVYTKLGDRLTYIGGLPTAETFALPYLDMGVTTYSSAVFNFVPEFATNFYAAVRKRDHATIHAGLKDFILPLIAIRNRKKGYAVSIIKAGMKVIGRDSGPVRPPLTDLTEQEIAELTALVKKLPAIRSSQQAAE.

It belongs to the DapA family.

It catalyses the reaction 5-dehydro-4-deoxy-D-glucarate + H(+) = 2,5-dioxopentanoate + CO2 + H2O. It functions in the pathway carbohydrate acid metabolism; D-glucarate degradation; 2,5-dioxopentanoate from D-glucarate: step 2/2. This is Probable 5-dehydro-4-deoxyglucarate dehydratase from Bradyrhizobium diazoefficiens (strain JCM 10833 / BCRC 13528 / IAM 13628 / NBRC 14792 / USDA 110).